Reading from the N-terminus, the 364-residue chain is sn-glycerol-3-phosphate import ATP-binding protein UgpC (364 aa).

Residues 4-235 enclose the ABC transporter domain; sequence VVLRNVRKTY…PATTFVASFI (232 aa). An ATP-binding site is contributed by 37 to 44; that stretch reads GPSGCGKS.

It belongs to the ABC transporter superfamily. sn-glycerol-3-phosphate importer (TC 3.A.1.1.3) family. The complex is composed of two ATP-binding proteins (UgpC), two transmembrane proteins (UgpA and UgpE) and a solute-binding protein (UgpB).

The protein resides in the cell inner membrane. The catalysed reaction is sn-glycerol 3-phosphate(out) + ATP + H2O = sn-glycerol 3-phosphate(in) + ADP + phosphate + H(+). Part of the ABC transporter complex UgpBAEC involved in sn-glycerol-3-phosphate (G3P) import. Responsible for energy coupling to the transport system. The sequence is that of sn-glycerol-3-phosphate import ATP-binding protein UgpC from Rhodopseudomonas palustris (strain BisB5).